We begin with the raw amino-acid sequence, 303 residues long: Beta-carotene 3-hydroxylase 2, chloroplastic (303 aa).

The N-terminal 52 residues, 1 to 52 (MAAGLSTIAVTLKPLNRSSFSANHPISTAVFPPSLRFNGFRRRKILTVCFVV), are a transit peptide targeting the chloroplast. Helical transmembrane passes span 96 to 116 (YLIAAVMSSFGITSMAIMAVY) and 130 to 150 (VLEMFGTFALSVGAAVGMEFW). The Fatty acid hydroxylase domain occupies 143–270 (AAVGMEFWAR…KFKGVPYGLF (128 aa)). The short motif at 155–160 (HRALWH) is the Histidine box-1 element. Positions 165–171 (NMHESHH) match the Histidine box-2 motif. The next 2 membrane-spanning stretches (helical) occupy residues 180–200 (LNDVFAITNAVPAIGLLYYGF) and 206–226 (VPGLCFGAGLGITMFGMAYMF). The Histidine box-3 signature appears at 228–233 (HDGLVH). The Histidine box-4 signature appears at 254 to 258 (HQLHH).

Belongs to the sterol desaturase family. As to quaternary structure, homodimer. As to expression, expressed in leaves, flowers, stems, roots and siliques.

The protein resides in the plastid. Its subcellular location is the chloroplast membrane. It carries out the reaction all-trans-beta-carotene + 4 reduced [2Fe-2S]-[ferredoxin] + 2 O2 + 4 H(+) = all-trans-zeaxanthin + 4 oxidized [2Fe-2S]-[ferredoxin] + 2 H2O. In terms of biological role, nonheme diiron monooxygenase involved in the biosynthesis of xanthophylls. Specific for beta-ring hydroxylations of beta-carotene. Also has a low activity toward the beta- and epsilon-rings of alpha-carotene. No activity with acyclic carotenoids such as lycopene and neurosporene. Uses ferredoxin as an electron donor. The polypeptide is Beta-carotene 3-hydroxylase 2, chloroplastic (BETA-OHASE 2) (Arabidopsis thaliana (Mouse-ear cress)).